The following is a 3567-amino-acid chain: Sushi, von Willebrand factor type A, EGF and pentraxin domain-containing protein 1 (3567 aa).

Residues 1 to 17 (MWSRLAFCCWALALVSG) form the signal peptide. The VWFA domain occupies 84-265 (ELVFLVDESS…LARRALHEDL (182 aa)). Asn187 carries an N-linked (GlcNAc...) asparagine glycan. Sushi domains are found at residues 377–436 (VHCP…FCRV), 437–496 (RTCP…RCVE), and 497–561 (RHCA…VCKD). 6 cysteine pairs are disulfide-bonded: Cys379/Cys421, Cys407/Cys434, Cys439/Cys481, Cys467/Cys494, Cys499/Cys544, and Cys530/Cys559. HYR domains are found at residues 560 to 644 (KDVE…KVID) and 645 to 724 (VEPP…VIKG). The Sushi 4 domain occupies 725–789 (SPCEVPFTPV…YSTEWPDCAI (65 aa)). Cystine bridges form between Cys727–Cys769, Cys753–Cys787, Cys1196–Cys1207, Cys1201–Cys1216, Cys1218–Cys1227, Cys1234–Cys1245, Cys1239–Cys1254, Cys1256–Cys1265, Cys1272–Cys1283, Cys1277–Cys1292, Cys1294–Cys1303, Cys1310–Cys1321, Cys1315–Cys1330, Cys1332–Cys1341, Cys1348–Cys1359, Cys1353–Cys1368, Cys1370–Cys1379, Cys1386–Cys1397, Cys1391–Cys1406, and Cys1408–Cys1417. Residues 1192–1228 (VFHECFLNPCHNSGTCQQLGRGYVCLCPPGYTGLKCE) form the EGF-like 1 domain. The region spanning 1230–1266 (DIDECSSLPCLNGGICRDQVGGFTCECSLGYSGQICE) is the EGF-like 2; calcium-binding domain. Residues 1268–1304 (NINECISSPCLNKGTCTDGLASYRCTCVKGYMGVHCE) form the EGF-like 3; calcium-binding domain. The EGF-like 4; calcium-binding domain maps to 1306 to 1342 (DVNECQSSPCLNNAVCKDQVGGFSCKCPPGFLGTRCE). The region spanning 1344 to 1380 (NVDECLSQPCQNGATCKDGANSFRCQCPAGFTGTHCE) is the EGF-like 5; calcium-binding domain. Residues 1382–1418 (NINECQSNPCRNQATCVDELNSYSCKCQPGFSGHRCE) form the EGF-like 6; calcium-binding domain. The region spanning 1423-1627 (SGFNLDFEVS…VKVDSSSMFC (205 aa)) is the Pentraxin (PTX) domain. 2 consecutive Sushi domains span residues 1628–1686 (SDCP…HCER) and 1687–1744 (IRCG…SCLD). 35 disulfide bridges follow: Cys1630–Cys1671, Cys1657–Cys1684, Cys1689–Cys1729, Cys1715–Cys1742, Cys1748–Cys1760, Cys1754–Cys1769, Cys1771–Cys1782, Cys1788–Cys1828, Cys1814–Cys1841, Cys1846–Cys1886, Cys1872–Cys1899, Cys1904–Cys1944, Cys1930–Cys1957, Cys1962–Cys2002, Cys1988–Cys2015, Cys2020–Cys2060, Cys2046–Cys2077, Cys2082–Cys2125, Cys2111–Cys2140, Cys2145–Cys2185, Cys2171–Cys2198, Cys2203–Cys2244, Cys2230–Cys2258, Cys2263–Cys2303, Cys2289–Cys2317, Cys2322–Cys2362, Cys2348–Cys2375, Cys2380–Cys2421, Cys2407–Cys2434, Cys2439–Cys2479, Cys2465–Cys2492, Cys2497–Cys2537, Cys2523–Cys2550, Cys2555–Cys2595, and Cys2581–Cys2607. Residues 1744 to 1783 (DVDECAVGSDCSEHASCLNTNGSYVCSCNPPYTGDGKNCA) enclose the EGF-like 7; calcium-binding domain. Sushi domains are found at residues 1780 to 1843 (KNCA…SCEA), 1844 to 1901 (ISCG…VCEL), 1902 to 1959 (VKCS…SCQL), 1960 to 2017 (VSCG…QCLA), 2018 to 2079 (VSCD…RCIA), 2080 to 2142 (HFCE…QCIP), 2143 to 2200 (VRCG…TCHP), 2201 to 2260 (VSCN…SCTP), 2261 to 2319 (LNCG…KCVP), 2320 to 2377 (TKCA…ICKM), 2378 to 2436 (VLCP…ECVP), 2437 to 2494 (VECP…MCKP), 2495 to 2552 (IECP…SCDA), and 2553 to 2609 (IHCS…TCVP). The segment at 2638 to 2645 (DMMEVPYL) is important for the interaction with integrin ITGA9:ITGB1. Sushi domains follow at residues 2660–2711 (NTKE…SCIS), 2712–2769 (IECD…RCEA), 2770–2827 (ISCS…MCIP), 2828–2885 (VDCG…SCMP), 2886–2943 (VRCP…VCKP), 2944–3001 (ATCG…SCLP), 3002–3057 (CRCS…LCEH), 3058–3115 (AQCG…TCEP), 3116–3174 (LSCG…TCSP), 3175–3234 (KKCP…SCIP), 3235–3292 (VVCG…VCRE), 3293–3350 (NRCE…LCKP), 3351–3409 (NPCP…RCEK), and 3410–3466 (ISCG…VCRA). Cystine bridges form between Cys2682–Cys2709, Cys2714–Cys2754, Cys2740–Cys2767, Cys2772–Cys2812, Cys2798–Cys2825, Cys2830–Cys2870, Cys2856–Cys2883, Cys2888–Cys2928, Cys2914–Cys2941, Cys2946–Cys2986, Cys2972–Cys2999, Cys3004–Cys3043, Cys3029–Cys3055, Cys3060–Cys3100, Cys3086–Cys3113, Cys3118–Cys3159, Cys3144–Cys3172, Cys3177–Cys3217, Cys3203–Cys3232, Cys3237–Cys3277, Cys3263–Cys3290, Cys3295–Cys3335, Cys3321–Cys3348, Cys3353–Cys3394, Cys3380–Cys3407, Cys3412–Cys3452, Cys3438–Cys3464, Cys3500–Cys3510, Cys3504–Cys3516, Cys3518–Cys3527, Cys3532–Cys3542, Cys3536–Cys3548, and Cys3550–Cys3559. EGF-like domains follow at residues 3496 to 3528 (EEPICILPCLNGGRCVAPYQCDCPTGWTGSRCH) and 3529 to 3560 (TATCQSPCLNGGKCIRPNRCHCLSAWTGHDCS).

As to quaternary structure, interacts (via Sushi domain 21) with ITGA9:ITGB1; thereby inhibits Ca(2+) intracellular signaling and as a result represses vasocontraction. Interacts (via Sushi domain 21) with ITGA4:ITGB1; thereby inhibits Ca(2+) intracellular signaling and as a result represses vasocontraction. Interacts with ANGPT1 and ANGPT2. Interacts with PEAR1 (via extracellular domain). Interacts with HSPG2, TLN1, FN1, COPA, CCT2, IQGAP1, LAMC1 and NID1. Interacts (via C-terminus) with TIE1. As to expression, expressed in the media layer of the arterial wall (at protein level). Highly expressed in lung and placenta, weakly expressed in the kidney, heart, brain and spleen. Also expressed in bone and periosteum, but not in cartilage and skeletal muscle.

It localises to the secreted. It is found in the nucleus. Its subcellular location is the cytoplasm. The protein resides in the membrane. In terms of biological role, required for morphological development, cell alignment and migration of lymphatic endothelial cells during embryonic development, potentially via modulation of ANGPT2-TIE1 signaling and subsequent activation of FOXC2 transcription. Required for embryonic lymphatic vascular development, via mediating the correct formation of the first lymphovenous contact site and tight association of the lymphatic endothelium with the venous endothelium. Represses PRKCA-mediated L-type voltage-gated channel Ca(2+) influx and ROCK-mediated calcium sensitivity in vascular smooth muscle cells, via its interaction with integrins, thereby inhibiting vasocontraction. Promotes platelet activation, via its interaction with PEAR1 and subsequent activation of AKT/mTOR signaling. Plays a role in epidermal development and keratinocyte differentiation, independent of cell-cell adhesion. May play a role in initial cell attachment of stromal osteogenic cells. May promote myoblast cell adhesion when in the presence of integrin ITGA9:ITGB1. The polypeptide is Sushi, von Willebrand factor type A, EGF and pentraxin domain-containing protein 1 (Svep1) (Mus musculus (Mouse)).